We begin with the raw amino-acid sequence, 182 residues long: Sec-independent protein translocase protein TatB (182 aa).

Residues 1-21 traverse the membrane as a helical segment; the sequence is MFDIGFSELLLVFVIGLIVLG. 2 disordered regions span residues 87 to 107 and 121 to 182; these read QAAE…ASDE and TQHE…SDKP. The segment covering 168–182 has biased composition (low complexity); sequence AAPVVESSPSSSDKP.

It belongs to the TatB family. The Tat system comprises two distinct complexes: a TatABC complex, containing multiple copies of TatA, TatB and TatC subunits, and a separate TatA complex, containing only TatA subunits. Substrates initially bind to the TatABC complex, which probably triggers association of the separate TatA complex to form the active translocon.

It localises to the cell inner membrane. Functionally, part of the twin-arginine translocation (Tat) system that transports large folded proteins containing a characteristic twin-arginine motif in their signal peptide across membranes. Together with TatC, TatB is part of a receptor directly interacting with Tat signal peptides. TatB may form an oligomeric binding site that transiently accommodates folded Tat precursor proteins before their translocation. The protein is Sec-independent protein translocase protein TatB of Salmonella choleraesuis (strain SC-B67).